Here is a 217-residue protein sequence, read N- to C-terminus: Superoxide dismutase [Mn], mitochondrial (217 aa).

Residues 1–17 constitute a mitochondrion transit peptide; sequence MFVARKISPNCKPGVRG. Mn(2+) is bound by residues H43, H91, D175, and H179.

It belongs to the iron/manganese superoxide dismutase family. Homotetramer. The cofactor is Mn(2+).

It localises to the mitochondrion matrix. The catalysed reaction is 2 superoxide + 2 H(+) = H2O2 + O2. Its function is as follows. Destroys superoxide anion radicals which are normally produced within the cells and which are toxic to biological systems. The polypeptide is Superoxide dismutase [Mn], mitochondrial (Sod2) (Drosophila melanogaster (Fruit fly)).